Here is a 160-residue protein sequence, read N- to C-terminus: Large ribosomal subunit protein eL29 (160 aa).

Over residues 1 to 26 (MAKSKNHTTHNQSRKWHRNGIKKPRS) the composition is skewed to basic residues. Disordered regions lie at residues 1–34 (MAKSKNHTTHNQSRKWHRNGIKKPRSQRYESLKG) and 115–160 (RLCQ…VKAP). K5 carries the N6-methyllysine modification. Position 31 is a phosphoserine (S31). At K33 the chain carries N6-acetyllysine. Residues 126–160 (KAGAKAPAKAQASAPAQAPKGAQAPKGAQAPVKAP) are compositionally biased toward low complexity. Repeat copies occupy residues 127-134 (AGAKAPAK) and 135-142 (AQASAPAQ). Positions 127–142 (AGAKAPAKAQASAPAQ) are 2 X 8 AA tandem repeats of A-X-A-K-A-P-A-[KQ]. S138 bears the Phosphoserine mark. K145 is subject to N6-acetyllysine.

It belongs to the eukaryotic ribosomal protein eL29 family. Component of the large ribosomal subunit.

It localises to the cytoplasm. Its function is as follows. Component of the large ribosomal subunit. The ribosome is a large ribonucleoprotein complex responsible for the synthesis of proteins in the cell. This Mus musculus (Mouse) protein is Large ribosomal subunit protein eL29 (Rpl29).